Here is a 32-residue protein sequence, read N- to C-terminus: SLGGFLKGVGKVLAGVGKVVADQFGNLLEAGQ.

A Glutamine amide modification is found at glutamine 32.

In terms of tissue distribution, expressed by the skin glands.

The protein resides in the secreted. In terms of biological role, antimicrobial peptide. In Phasmahyla jandaia (Jandaia leaf frog), this protein is Dermatoxin-J3.